Consider the following 342-residue polypeptide: MKKKLILAAAGAMAVFSLAACSSGSKDIATMKGSTITVDDFYNQIKEQSTSQQAFSQMVIYKVFEEKYGDKVTDKDIQKNFDEAKEQVEAQGGKFSDALKQAGLTEKTFKKQLKQRAAYDAGLKAHLKITDEDLKTAWASFHPEVEAQIIQVASEDDAKAVKKEITDGGDFTKIAKEKSTDTATKKDGGKIKFDSQATTVPAEVKEAAFKLKDGEVSEPIAATNMQTYQTTYYVVKMTKNKAKGNDMKPYEKEIKKIAEETKLADQTFVSKVISDELKAANVKIKDDAFKNALAGYMQTESSSASSEKKESKSSDSKTSDTKTSDSEKATDSSSKTTESSSK.

A signal peptide spans 1–20 (MKKKLILAAAGAMAVFSLAA). Cys-21 is lipidated: N-palmitoyl cysteine. The S-diacylglycerol cysteine moiety is linked to residue Cys-21. The PpiC domain occupies 142 to 235 (HPEVEAQIIQ…QTYQTTYYVV (94 aa)). Residues 297–342 (MQTESSSASSEKKESKSSDSKTSDTKTSDSEKATDSSSKTTESSSK) are disordered. A compositionally biased stretch (basic and acidic residues) spans 306 to 330 (SEKKESKSSDSKTSDTKTSDSEKAT). Low complexity predominate over residues 331–342 (DSSSKTTESSSK).

This sequence belongs to the PrsA family.

The protein localises to the cell membrane. It carries out the reaction [protein]-peptidylproline (omega=180) = [protein]-peptidylproline (omega=0). Its function is as follows. Plays a major role in protein secretion by helping the post-translocational extracellular folding of several secreted proteins. The chain is Foldase protein PrsA from Enterococcus faecalis (strain ATCC 700802 / V583).